The chain runs to 860 residues: Leucine--tRNA ligase (860 aa).

Residues 42-52 carry the 'HIGH' region motif; that stretch reads PYPSGRLHMGH. The 'KMSKS' region signature appears at 619-623; that stretch reads KMSKS. Residue Lys622 coordinates ATP.

This sequence belongs to the class-I aminoacyl-tRNA synthetase family.

It is found in the cytoplasm. It catalyses the reaction tRNA(Leu) + L-leucine + ATP = L-leucyl-tRNA(Leu) + AMP + diphosphate. The sequence is that of Leucine--tRNA ligase from Serratia proteamaculans (strain 568).